Consider the following 150-residue polypeptide: Transcription antitermination protein NusB (150 aa).

Belongs to the NusB family.

Its function is as follows. Involved in transcription antitermination. Required for transcription of ribosomal RNA (rRNA) genes. Binds specifically to the boxA antiterminator sequence of the ribosomal RNA (rrn) operons. In Streptococcus pyogenes serotype M1, this protein is Transcription antitermination protein NusB.